The following is a 99-amino-acid chain: Sperm protein associated with the nucleus on the X chromosome N4 (99 aa).

Positions 1–10 are enriched in polar residues; the sequence is MEEPTSSTNE. Residues 1-99 are disordered; that stretch reads MEEPTSSTNE…AGSPQDGGQN (99 aa). Over residues 11-22 the composition is skewed to basic and acidic residues; that stretch reads NKMKSPCESNKR. A compositionally biased stretch (basic residues) spans 23 to 32; it reads KVDKKKKNLH. Polar residues predominate over residues 64-78; it reads SNQLENNQPTESSTD.

This sequence belongs to the SPAN-X family.

The polypeptide is Sperm protein associated with the nucleus on the X chromosome N4 (SPANXN4) (Homo sapiens (Human)).